Here is a 337-residue protein sequence, read N- to C-terminus: Ycf66-like protein (337 aa).

The interval 111–337 (TEAELDQLEP…GADDQERFDY (227 aa)) is disordered. The span at 113–123 (AELDQLEPEDE) shows a compositional bias: acidic residues. 2 stretches are compositionally biased toward basic and acidic residues: residues 133-143 (RGYDDDARSGR) and 253-269 (FGDR…RPYE). The segment covering 304–316 (QSRSGNPRSQRPS) has biased composition (polar residues).

Belongs to the ycf66 family.

The protein is Ycf66-like protein of Synechocystis sp. (strain ATCC 27184 / PCC 6803 / Kazusa).